Reading from the N-terminus, the 239-residue chain is Ribonuclease PH (239 aa).

Residues Arg87 and Gly125–Arg127 contribute to the phosphate site.

Belongs to the RNase PH family. In terms of assembly, homohexameric ring arranged as a trimer of dimers.

The enzyme catalyses tRNA(n+1) + phosphate = tRNA(n) + a ribonucleoside 5'-diphosphate. Its function is as follows. Phosphorolytic 3'-5' exoribonuclease that plays an important role in tRNA 3'-end maturation. Removes nucleotide residues following the 3'-CCA terminus of tRNAs; can also add nucleotides to the ends of RNA molecules by using nucleoside diphosphates as substrates, but this may not be physiologically important. Probably plays a role in initiation of 16S rRNA degradation (leading to ribosome degradation) during starvation. The protein is Ribonuclease PH of Ectopseudomonas mendocina (strain ymp) (Pseudomonas mendocina).